The following is an 83-amino-acid chain: Putative protein T-ENOL (83 aa).

Residues 1-33 form a disordered region; that stretch reads MASTPMGNEGEKKSSWPSQAAPSLRGGPASLSR.

This Homo sapiens (Human) protein is Putative protein T-ENOL.